We begin with the raw amino-acid sequence, 288 residues long: Polyamine aminopropyltransferase (288 aa).

The PABS domain occupies 9-238 (ETLHDQFGQY…GIMTFAWATD (230 aa)). Gln33 serves as a coordination point for S-methyl-5'-thioadenosine. Residues His64 and Asp88 each contribute to the spermidine site. Residues Glu108 and 140–141 (DG) contribute to the S-methyl-5'-thioadenosine site. Asp158 acts as the Proton acceptor in catalysis. 158–161 (DCTD) is a binding site for spermidine. Pro165 contacts S-methyl-5'-thioadenosine.

Belongs to the spermidine/spermine synthase family. Homodimer or homotetramer.

Its subcellular location is the cytoplasm. The enzyme catalyses S-adenosyl 3-(methylsulfanyl)propylamine + putrescine = S-methyl-5'-thioadenosine + spermidine + H(+). It functions in the pathway amine and polyamine biosynthesis; spermidine biosynthesis; spermidine from putrescine: step 1/1. In terms of biological role, catalyzes the irreversible transfer of a propylamine group from the amino donor S-adenosylmethioninamine (decarboxy-AdoMet) to putrescine (1,4-diaminobutane) to yield spermidine. The chain is Polyamine aminopropyltransferase from Escherichia coli (strain UTI89 / UPEC).